Here is a 131-residue protein sequence, read N- to C-terminus: Global transcriptional regulator Spx 1 (131 aa).

Cysteines 10 and 13 form a disulfide.

This sequence belongs to the ArsC family. Spx subfamily. As to quaternary structure, interacts with the C-terminal domain of the alpha subunit of the RNAP.

It localises to the cytoplasm. Global transcriptional regulator that plays a key role in stress response and exerts either positive or negative regulation of genes. Acts by interacting with the C-terminal domain of the alpha subunit of the RNA polymerase (RNAP). This interaction can enhance binding of RNAP to the promoter region of target genes and stimulate their transcription, or block interaction of RNAP with activator. In Bacillus anthracis, this protein is Global transcriptional regulator Spx 1.